The following is a 236-amino-acid chain: Ribosome maturation protein SDO1 homolog (236 aa).

This sequence belongs to the SDO1/SBDS family.

The protein is Ribosome maturation protein SDO1 homolog of Pyrococcus abyssi (strain GE5 / Orsay).